The primary structure comprises 634 residues: Pheromone-processing carboxypeptidase KEX1 (634 aa).

A signal peptide spans 1–24; the sequence is MKLAMRRASTFALLALSWSAAVSA. Over 25-512 the chain is Lumenal; that stretch reads ASSAGDYFVR…DEAKWYAYRK (488 aa). Catalysis depends on residues Ser177 and Asp378. N-linked (GlcNAc...) asparagine glycosylation occurs at Asn429. The active site involves His440. Residues 468–498 form a disordered region; that stretch reads NPTDSRLDGEKLPETTVGGAAGNSTSKQEEE. A glycan (N-linked (GlcNAc...) asparagine) is linked at Asn490. The helical transmembrane segment at 513-533 threads the bilayer; the sequence is SGEVVLVIVAVAAVAWGWYVW. At 534-634 the chain is on the cytoplasmic side; sequence RDRRRRRGYQ…EGGPSGGRGR (101 aa). The tract at residues 542–634 is disordered; sequence YQGIFGGSPS…EGGPSGGRGR (93 aa).

This sequence belongs to the peptidase S10 family.

It localises to the golgi apparatus. Its subcellular location is the trans-Golgi network membrane. The enzyme catalyses Preferential release of a C-terminal arginine or lysine residue.. Protease with a carboxypeptidase B-like function involved in the C-terminal processing of the lysine and arginine residues from protein precursors. Promotes cell fusion and is involved in the programmed cell death. In Pyricularia oryzae (strain 70-15 / ATCC MYA-4617 / FGSC 8958) (Rice blast fungus), this protein is Pheromone-processing carboxypeptidase KEX1 (KEX1).